The sequence spans 435 residues: Tol-Pal system protein TolB (435 aa).

The N-terminal stretch at 1–20 (MRKIIAGVFIFVFLISNLYA) is a signal peptide.

This sequence belongs to the TolB family. In terms of assembly, the Tol-Pal system is composed of five core proteins: the inner membrane proteins TolA, TolQ and TolR, the periplasmic protein TolB and the outer membrane protein Pal. They form a network linking the inner and outer membranes and the peptidoglycan layer.

Its subcellular location is the periplasm. In terms of biological role, part of the Tol-Pal system, which plays a role in outer membrane invagination during cell division and is important for maintaining outer membrane integrity. The chain is Tol-Pal system protein TolB from Francisella tularensis subsp. mediasiatica (strain FSC147).